The chain runs to 453 residues: Collagen alpha-4(IV) chain (453 aa).

The interval 1 to 218 (GPPGPPGAPG…PPGPMGDPGP (218 aa)) is disordered. The triple-helical region stretch occupies residues 1-222 (GPPGPPGAPG…MGDPGPIGFG (222 aa)). Pro residues-rich tracts occupy residues 26 to 44 (QGPP…PGPP), 60 to 72 (PGPP…PGPP), and 95 to 122 (PQGP…PLGP). Low complexity predominate over residues 153 to 162 (PEGTMGLPGM). Residues 174 to 183 (PGLDGRRGED) show a composition bias toward basic and acidic residues. Positions 206 to 215 (APGPPGPMGD) are enriched in pro residues. One can recognise a Collagen IV NC1 domain in the interval 228–453 (GFLLVLHSQT…SRCQVCVKHS (226 aa)). 6 cysteine pairs are disulfide-bonded: cysteine 243/cysteine 332, cysteine 276/cysteine 329, cysteine 288/cysteine 294, cysteine 351/cysteine 449, cysteine 385/cysteine 446, and cysteine 397/cysteine 404.

It belongs to the type IV collagen family. In terms of assembly, there are six type IV collagen isoforms, alpha 1(IV)-alpha 6(IV), each of which can form a triple helix structure with 2 other chains to generate type IV collagen network. The alpha 3(IV) chain forms a triple helical protomer with alpha 4(IV) and alpha 5(IV); this triple helical structure dimerizes through NC1-NC1 domain interactions such that the alpha 3(IV), alpha 4(IV) and alpha 5(IV) chains of one protomer connect with the alpha 5(IV), alpha 4(IV) and alpha 3(IV) chains of the opposite protomer, respectively. Associates with LAMB2 at the neuromuscular junction and in GBM. Post-translationally, prolines at the third position of the tripeptide repeating unit (G-X-Y) are hydroxylated in some or all of the chains. In terms of processing, type IV collagens contain numerous cysteine residues which are involved in inter- and intramolecular disulfide bonding. 12 of these, located in the NC1 domain, are conserved in all known type IV collagens. The trimeric structure of the NC1 domains is stabilized by covalent bonds between Lys and Met residues. In terms of tissue distribution, alpha 3 and alpha 4 type IV collagens are colocalized and present only in basement membranes of kidney, eye, cochlea, lung and brain.

The protein resides in the secreted. It localises to the extracellular space. The protein localises to the extracellular matrix. Its subcellular location is the basement membrane. In terms of biological role, type IV collagen is the major structural component of glomerular basement membranes (GBM), forming a 'chicken-wire' meshwork together with laminins, proteoglycans and entactin/nidogen. The polypeptide is Collagen alpha-4(IV) chain (COL4A4) (Bos taurus (Bovine)).